The primary structure comprises 499 residues: uncharacterized protein (499 aa).

Residues 6–35 and 272–282 each bind FAD; these read EAVIIGGGPVGFMLASELAIAGVGTCVIER and YRDGRIFLAGD.

Belongs to the PheA/TfdB FAD monooxygenase family. FAD is required as a cofactor.

This is an uncharacterized protein from Bacillus subtilis (strain 168).